A 1170-amino-acid chain; its full sequence is DNA excision repair protein ERCC-5 (1170 aa).

The N-domain stretch occupies residues 1 to 78 (MGVQGLWKLL…RIRPIFVFDG (78 aa)). N6-acetyllysine is present on Lys-8. Asp-30 contributes to the Mg(2+) binding site. Residues 31–67 (ISIWLNQALKGVRDSHGNVIENAHLLTLFHRLCKLLF) form a DNA-binding; may bind to the undamaged single-strand DNA of the DNA repair bubble region. Asp-77 contributes to the Mg(2+) binding site. Positions 79 to 784 (DAPLLKKQTL…LRLFGVPYIQ (706 aa)) are spacer region. Disordered regions lie at residues 304-479 (DSES…RCDT), 520-587 (HVSG…PKAC), and 600-701 (LENA…ECLL). Positions 306–323 (ESLPSSSNVHSVSSNLKS) are enriched in low complexity. Basic and acidic residues-rich tracts occupy residues 324-336 (SPHEKVKPEREPE) and 363-373 (SREGRQSKERN). Ser-384 carries the post-translational modification Phosphoserine. Positions 455–474 (TSGSSANGQTDSAHSFTTAS) are enriched in polar residues. Positions 539–551 (THSDQGIDIHPED) are enriched in basic and acidic residues. Positions 659-676 (SVVSNSELQTESSEASTH) are enriched in polar residues. Residues 677-698 (LSEKDAEEPRETLEEGTSRDTE) show a composition bias toward basic and acidic residues. Ser-704 and Ser-705 each carry phosphoserine. The segment at 785–880 (APMEAEAQCA…VTAMEILNEF (96 aa)) is I-domain. Positions 788, 790, 809, and 811 each coordinate Mg(2+). Residues 819–835 (HVYKNFFNKNKFVEYYQ) form a DNA-binding; may bind to the undamaged single-strand DNA of the DNA repair bubble region. The DNA-binding; H2TH (helix-2turn-helix) motif which binds double-stranded DNA stretch occupies residues 847-879 (RNKLINLAYLLGSDYTEGIPTVGCVTAMEILNE). Asp-860 lines the Mg(2+) pocket. Positions 911 to 917 (TKVKKKL) are DNA-binding; may bind double-stranded DNA. An interaction with PCNA region spans residues 980–1008 (LKHLNAHQTQLRIDSFFRLAQQEKQDAKL). The tract at residues 1010–1170 (KSHRLNRAVT…KSMKRRKKKT (161 aa)) is interaction with ERCC6/CSB. The segment at 1033 to 1146 (LTKVTEALDD…DDEDKAKTVL (114 aa)) is disordered. Basic and acidic residues predominate over residues 1041–1060 (DDAKGKTQKRELPYKKETSV). The Nuclear localization signal 1 signature appears at 1049–1065 (KRELPYKKETSVPKRRR). The span at 1094 to 1110 (SVMSARQRSAAESSKIS) shows a compositional bias: polar residues. A Nuclear localization signal 2 motif is present at residues 1153–1170 (FGKKKLKLKSMKRRKKKT).

Belongs to the XPG/RAD2 endonuclease family. XPG subfamily. As to quaternary structure, monomer. Homodimer. Component of the homologous recombination repair (HR) complex composed of ERCC5/XPG, BRCA2, PALB2, DSS1 and RAD51. Within the complex, interacts with BRCA2 and PALB2. Interacts with RNA polymerase II. Interacts (via C-terminus) with ERCC6/CSB; the interaction stimulates ERCC6/CSB binding to the DNA repair bubble and ERCC6/CSB ATPase activity. May form a complex composed of RNA polymerase II, ERCC6/CSB and ERCC5/XPG which associates with the DNA repair bubble during transcription-coupled nucleotide excision repair. Interacts with BRCA1; the interaction promotes the release of BRCA1 from DNA. Interacts with PCNA. Interacts with NTHL1; the interaction stimulates NTHL1 activity and NTHL1 binding to its DNA substrate. Mg(2+) is required as a cofactor.

It localises to the nucleus. It is found in the chromosome. In terms of biological role, single-stranded structure-specific DNA endonuclease involved in DNA excision repair. Makes the 3'incision in DNA nucleotide excision repair (NER). Binds and bends DNA repair bubble substrate and breaks base stacking at the single-strand/double-strand DNA junction of the DNA bubble. Plays a role in base excision repair (BER) by promoting the binding of DNA glycosylase NTHL1 to its substrate and increasing NTHL1 catalytic activity that removes oxidized pyrimidines from DNA. Involved in transcription-coupled nucleotide excision repair (TCR) which allows RNA polymerase II-blocking lesions to be rapidly removed from the transcribed strand of active genes. Functions during the initial step of TCR in cooperation with ERCC6/CSB to recognized stalled RNA polymerase II. Also, stimulates ERCC6/CSB binding to the DNA repair bubble and ERCC6/CSB ATPase activity. Required for DNA replication fork maintenance and preservation of genomic stability. Involved in homologous recombination repair (HRR) induced by DNA replication stress by recruiting RAD51, BRCA2, and PALB2 to the damaged DNA site. During HRR, binds to the replication fork with high specificity and stabilizes it. Also, acts upstream of HRR, to promote the release of BRCA1 from DNA. The protein is DNA excision repair protein ERCC-5 (Ercc5) of Mus musculus (Mouse).